The primary structure comprises 1333 residues: Aldehyde oxidase 1 (1333 aa).

The 2Fe-2S ferredoxin-type domain occupies 4–91 (PQLLFYVNGQ…GTAVTTVEGI (88 aa)). [2Fe-2S] cluster contacts are provided by Cys-43, Cys-48, Cys-51, and Cys-73. Gln-112 contacts Mo-molybdopterin. Residues Cys-113, Cys-116, Cys-148, and Cys-150 each coordinate [2Fe-2S] cluster. A Mo-molybdopterin-binding site is contributed by Cys-150. One can recognise an FAD-binding PCMH-type domain in the interval 235-420 (FYSNRMTWIS…VSVNIPCSRK (186 aa)). Residues 263–270 (IVMGYTSV), Ala-344, Ser-353, His-357, Asp-366, and Leu-410 contribute to the FAD site. Mo-molybdopterin is bound by residues 801 to 802 (AF) and Met-1042. Ser-1063 carries the phosphoserine modification. Residues 1083–1086 (GSVV), Gln-1198, and Leu-1263 each bind Mo-molybdopterin. The active-site Proton acceptor; for azaheterocycle hydroxylase activity is Glu-1265.

The protein belongs to the xanthine dehydrogenase family. Homodimer. [2Fe-2S] cluster serves as cofactor. Requires FAD as cofactor. Mo-molybdopterin is required as a cofactor. Post-translationally, the N-terminus is blocked. Expression in liver (at protein level). Also detected in heart, lung, spleen and kidney.

Its subcellular location is the cytoplasm. The enzyme catalyses an aldehyde + O2 + H2O = a carboxylate + H2O2 + H(+). The catalysed reaction is retinal + O2 + H2O = retinoate + H2O2 + H(+). Its activity is regulated as follows. Inhibited by menadione and isovanillin. Not inhibited by allopurinol, a xanthine dehydrogenase potent inhibitor. Inhibited by the flavonoids quercetin, myricetin and genistein. Nitric oxide generation is inhibited by raloxifene and competitively inhibited by an increase in oxygen levels. Its function is as follows. Oxidase with broad substrate specificity, oxidizing aromatic azaheterocycles, such as N1-methylnicotinamide, N-methylphthalazinium and phthalazine, as well as aldehydes, such as benzaldehyde, retinal, pyridoxal, and vanillin. Plays a role in the metabolism of xenobiotics and drugs containing aromatic azaheterocyclic substituents. Participates in the bioactivation of prodrugs such as famciclovir, catalyzing the oxidation step from 6-deoxypenciclovir to penciclovir, which is a potent antiviral agent. Is probably involved in the regulation of reactive oxygen species homeostasis. Is a prominent source of superoxide generation via the one-electron reduction of molecular oxygen. Also catalyzes nitric oxide (NO) production; under anaerobic conditions, reduces nitrite to NO with NADH or aldehyde as electron donor, but under aerobic conditions, NADH is the preferred substrate. These reactions may be catalyzed by several isozymes. May play a role in adipogenesis. This Rattus norvegicus (Rat) protein is Aldehyde oxidase 1.